Reading from the N-terminus, the 264-residue chain is Methionine aminopeptidase (264 aa).

Position 79 (histidine 79) interacts with substrate. Aspartate 97, aspartate 108, and histidine 171 together coordinate a divalent metal cation. Substrate is bound at residue histidine 178. The a divalent metal cation site is built by glutamate 204 and glutamate 235.

It belongs to the peptidase M24A family. Methionine aminopeptidase type 1 subfamily. In terms of assembly, monomer. The cofactor is Co(2+). Zn(2+) serves as cofactor. It depends on Mn(2+) as a cofactor. Requires Fe(2+) as cofactor.

It carries out the reaction Release of N-terminal amino acids, preferentially methionine, from peptides and arylamides.. In terms of biological role, removes the N-terminal methionine from nascent proteins. The N-terminal methionine is often cleaved when the second residue in the primary sequence is small and uncharged (Met-Ala-, Cys, Gly, Pro, Ser, Thr, or Val). Requires deformylation of the N(alpha)-formylated initiator methionine before it can be hydrolyzed. The sequence is that of Methionine aminopeptidase from Salmonella typhi.